The chain runs to 211 residues: Large ribosomal subunit protein bL25 (211 aa).

This sequence belongs to the bacterial ribosomal protein bL25 family. CTC subfamily. Part of the 50S ribosomal subunit; part of the 5S rRNA/L5/L18/L25 subcomplex. Contacts the 5S rRNA. Binds to the 5S rRNA independently of L5 and L18.

This is one of the proteins that binds to the 5S RNA in the ribosome where it forms part of the central protuberance. The sequence is that of Large ribosomal subunit protein bL25 from Anaplasma phagocytophilum (strain HZ).